The chain runs to 437 residues: Ribosomal protein uS12 methylthiotransferase RimO (437 aa).

The region spanning 5–116 (PTIAISHLGC…IVEIVERVET (112 aa)) is the MTTase N-terminal domain. Residues Cys14, Cys50, Cys79, Cys154, Cys158, and Cys161 each coordinate [4Fe-4S] cluster. Residues 140–369 (TTSEGVAYLR…MLTQQPISER (230 aa)) enclose the Radical SAM core domain. One can recognise a TRAM domain in the interval 372 to 437 (QAYIGQTVDV…DTYDLYGEIV (66 aa)).

Belongs to the methylthiotransferase family. RimO subfamily. [4Fe-4S] cluster is required as a cofactor.

It localises to the cytoplasm. It carries out the reaction L-aspartate(89)-[ribosomal protein uS12]-hydrogen + (sulfur carrier)-SH + AH2 + 2 S-adenosyl-L-methionine = 3-methylsulfanyl-L-aspartate(89)-[ribosomal protein uS12]-hydrogen + (sulfur carrier)-H + 5'-deoxyadenosine + L-methionine + A + S-adenosyl-L-homocysteine + 2 H(+). Functionally, catalyzes the methylthiolation of an aspartic acid residue of ribosomal protein uS12. The chain is Ribosomal protein uS12 methylthiotransferase RimO from Microcystis aeruginosa (strain NIES-843 / IAM M-2473).